The primary structure comprises 565 residues: Liver carboxylesterase 1 (565 aa).

An N-terminal signal peptide occupies residues 1-18; sequence MWLCALALASLAACTAWG. N79 is a glycosylation site (N-linked (GlcNAc...) asparagine). A disulfide bond links C87 and C116. S221 serves as the catalytic Acyl-ester intermediate. C273 and C284 are disulfide-bonded. The Charge relay system role is filled by E353. N-linked (GlcNAc...) asparagine glycosylation occurs at N389. The active-site Charge relay system is H467. A short sequence motif (prevents secretion from ER) is located at residue L565.

The protein belongs to the type-B carboxylesterase/lipase family. As to quaternary structure, monomer.

Its subcellular location is the endoplasmic reticulum lumen. It carries out the reaction a carboxylic ester + H2O = an alcohol + a carboxylate + H(+). Involved in the detoxification of xenobiotics and in the activation of ester and amide prodrugs. This is Liver carboxylesterase 1 from Oryctolagus cuniculus (Rabbit).